The following is a 455-amino-acid chain: Aminopeptidase YwaD (455 aa).

A signal peptide spans 1–31 (MKKLLTVMTMAVLTAGTLLLPAQSVTPAAHA). Zn(2+) contacts are provided by H250, D262, E295, D323, and H401.

Belongs to the peptidase M28 family. M28B subfamily. As to quaternary structure, monomer. The cofactor is Zn(2+).

The protein resides in the secreted. It carries out the reaction Release of N-terminal Arg and Lys from oligopeptides when P1' is not Pro. Also acts on arylamides of Arg and Lys.. The catalysed reaction is Release of an N-terminal amino acid, preferentially leucine, but not glutamic or aspartic acids.. In terms of biological role, catalyzes the hydrolysis of a range of N-terminal amino acids. The polypeptide is Aminopeptidase YwaD (ywaD) (Bacillus subtilis (strain 168)).